A 293-amino-acid polypeptide reads, in one-letter code: Pantothenate synthetase (293 aa).

Residue 38 to 45 (MGALHEGH) participates in ATP binding. H45 (proton donor) is an active-site residue. Q69 is a (R)-pantoate binding site. Q69 serves as a coordination point for beta-alanine. 155 to 158 (GEKD) is an ATP binding site. A (R)-pantoate-binding site is contributed by Q161. 192–195 (QSSR) serves as a coordination point for ATP.

The protein belongs to the pantothenate synthetase family. As to quaternary structure, homodimer.

It is found in the cytoplasm. It carries out the reaction (R)-pantoate + beta-alanine + ATP = (R)-pantothenate + AMP + diphosphate + H(+). It functions in the pathway cofactor biosynthesis; (R)-pantothenate biosynthesis; (R)-pantothenate from (R)-pantoate and beta-alanine: step 1/1. Its function is as follows. Catalyzes the condensation of pantoate with beta-alanine in an ATP-dependent reaction via a pantoyl-adenylate intermediate. The chain is Pantothenate synthetase from Hyphomonas neptunium (strain ATCC 15444).